Here is a 224-residue protein sequence, read N- to C-terminus: Cerebellin-2 (224 aa).

The first 51 residues, 1-51, serve as a signal peptide directing secretion; that stretch reads MPAPGQGPRGPLLSMPGRRGALREPADFGSSLGAVLALLLLLLPACCPVRA. Asparagine 53 and asparagine 110 each carry an N-linked (GlcNAc...) asparagine glycan. The 137-residue stretch at 88 to 224 folds into the C1q domain; the sequence is SGSAKVAFSA…TFSGFLVFPL (137 aa).

As to quaternary structure, homohexamer; disulfide-linked homotrimers. The trimers are assembled via the globular C1q domains. The trimers associate via N-terminal cysteine residues to form disulfide-linked hexamers. May form homooligomers or heterooligomers with CBLN1 and CBLN3 prior to secretion. Once secreted, does not interact with other CBLN family members. Interacts with GRID2, and more weakly with GRID1. Interacts with NRXN1 and NRXN2 long and short isoforms produced by alternative promoter usage. Weakly interacts with NRXN3 short isoform and not at all with NRXN3 long isoform. In terms of tissue distribution, expressed in various brain regions with higher levels in the olfactory bulb, cerebral cortex, certain thalamic and hypothalamic nuclei, superior and inferior colliculi and some brainstem nuclei. Highly expressed in the dorsal medial habenula.

The protein localises to the secreted. Acts as a synaptic organizer in specific subsets of neurons in the brain. Essential for long-term maintenance but not establishment of excitatory synapses. Functions as part of a trans-synaptic complex by binding to postsynaptic GRID1 and presynaptic neurexins. This interaction helps regulate the activity of NMDA and AMPA receptors at hippocampal synapses without affecting synapse formation. NRXN1B-CBLN2-GRID1 complex transduce presynaptic signals into postsynaptic NMDAR response. NRXN3B-CBLN2-GRID1 complex transduce presynaptic signals into postsynaptic AMPAR response. This chain is Cerebellin-2 (Cbln2), found in Mus musculus (Mouse).